The chain runs to 147 residues: Myosin regulatory light chain (147 aa).

N-acetylthreonine is present on T1. EF-hand domains lie at 2–37 (ASAD…LGKN), 73–108 (EQSK…LGDA), and 109–144 (LTSS…GYPL). Residues D15, D17, D19, K21, E26, D86, N90, T92, and E97 each coordinate Ca(2+).

This is Myosin regulatory light chain from Physarum polycephalum (Slime mold).